The primary structure comprises 396 residues: Bifunctional enzyme Fae/Hps (396 aa).

The interval 1–161 is formaldehyde-activating enzyme; the sequence is MMLIGEALIG…HEKDRAAHAV (161 aa). The active-site Proton donor is the histidine 17. The substrate site is built by aspartate 19, leucine 48, lysine 66, threonine 68, and glutamine 83. The tract at residues 162 to 396 is 3-hexulose-6-phosphate synthase; that stretch reads MGFKISKLWD…IDQFRIMTDF (235 aa).

It in the N-terminal section; belongs to the formaldehyde-activating enzyme family. This sequence in the C-terminal section; belongs to the HPS/KGPDC family. HPS subfamily.

The enzyme catalyses 5,6,7,8-tetrahydromethanopterin + formaldehyde = 5,10-methylenetetrahydromethanopterin + H2O. The catalysed reaction is D-ribulose 5-phosphate + formaldehyde = D-arabino-hex-3-ulose 6-phosphate. It functions in the pathway carbohydrate biosynthesis; D-ribose 5-phosphate biosynthesis. In terms of biological role, catalyzes the condensation of formaldehyde with tetrahydromethanopterin (H(4)MPT) to 5,10-methylenetetrahydromethanopterin. Its function is as follows. Catalyzes the reversible formation of ribulose-5-phosphate and formaldehyde from 3-hexulose-6-phosphate. This Methanococcoides burtonii (strain DSM 6242 / NBRC 107633 / OCM 468 / ACE-M) protein is Bifunctional enzyme Fae/Hps.